A 787-amino-acid chain; its full sequence is Glutamine-dependent NAD(+) synthetase (787 aa).

In terms of domain architecture, CN hydrolase spans 5 to 275 (VTVAVSTLNQ…VEVTLATIDL (271 aa)). Glu45 acts as the Proton acceptor; for glutaminase activity in catalysis. The active-site For glutaminase activity is Lys114. Catalysis depends on Cys175, which acts as the Nucleophile; for glutaminase activity. The segment at 325-787 (MHTPEEEIAL…KIKDRTGIPV (463 aa)) is ligase. 355–362 (PLSGGVDS) serves as a coordination point for ATP. Ser357 is a catalytic residue. Ser703 is subject to Phosphoserine.

The protein in the C-terminal section; belongs to the NAD synthetase family.

The catalysed reaction is deamido-NAD(+) + L-glutamine + ATP + H2O = L-glutamate + AMP + diphosphate + NAD(+) + H(+). It participates in cofactor biosynthesis; NAD(+) biosynthesis; NAD(+) from deamido-NAD(+) (L-Gln route): step 1/1. In terms of biological role, catalyzes the ATP-dependent amidation of deamido-NAD to form NAD. Uses L-glutamine as a nitrogen source. Because of its role in energy metabolism, involved in the modulation of aged-related cardiac function, mobility, and lifespan. This Drosophila melanogaster (Fruit fly) protein is Glutamine-dependent NAD(+) synthetase.